The sequence spans 232 residues: Nuclear transcription factor Y subunit nfyc-1 (232 aa).

The segment at 191 to 232 (TVPTTSTNGPGHMSEDSFQDPNMHSDFHQRTSNSSVNRSHHN) is disordered. The segment covering 220 to 232 (RTSNSSVNRSHHN) has biased composition (polar residues).

This sequence belongs to the NFYC/HAP5 subunit family. As to quaternary structure, forms two NF-Y heterotrimeric transcription factor complexes: the nfya-1-NF-Y complex is composed of nfya-1, nfyb-1 and nfyc-1, and the nfya-2-NF-Y complex is composed of nfya-2, nfyb-1 and nfyc-1. Interacts with nfyb-1; the interaction is direct and is required for the interaction with either nfya-1 or nfya-2, and subsequent binding of the complex to the 5'-CCAAT-3' box motif in DNA. As to expression, expressed in certain parts of the gonads with high expression in fertilized oocytes in the uterus and mature oocytes from the distal to the proximal arm of the gonad, but weak expression in the syncytial ovaries and immature oocytes at the beginning of the proximal arm of the gonad. Expressed in the excretory cell, secretory cells in the pharyngeal terminal bulb wall, in the small ganglia surrounding the pharynx and in the neurons running anteriorly to the sensory organs in the head. Not expressed in the intestine, the hypodermis or body wall muscle surrounding the pseudocoelomic space.

The protein localises to the nucleus. Its subcellular location is the cytoplasm. It localises to the perikaryon. In terms of biological role, component of sequence-specific heterotrimeric transcription factor (nfya-1-NF-Y and nfya-2-NF-Y) complexes which specifically recognize a 5'-CCAAT-3' box motif found in the promoters of its target genes to regulate their expression and control cellular identity in particular tissue types. In association with the components in the NF-Y complexes, represses the expression of the T-box transcription factor tbx-2 throughout larval development, which most likely restricts its expression to certain tissues. May act to repress txb-2 expression in conjunction with tbx-2 itself, which has an autoregulatory role. In association with the components in the nfya-1-NF-Y complex, negatively regulates the expression of the homeobox protein egl-5 to spatially restrict its expression in tissues such as the head. May regulate egl-5 expression in association with the mes-2-mes-3-mes-6 complex. This chain is Nuclear transcription factor Y subunit nfyc-1, found in Caenorhabditis elegans.